The following is a 365-amino-acid chain: Caffeic acid 3-O-methyltransferase (365 aa).

Asn-133 serves as a coordination point for (E)-ferulate. Positions 210, 233, 253, 254, 266, and 267 each coordinate S-adenosyl-L-homocysteine. His-271 (proton acceptor) is an active-site residue. A (E)-5-hydroxyferulate-binding site is contributed by Asp-272.

The protein belongs to the class I-like SAM-binding methyltransferase superfamily. Cation-independent O-methyltransferase family. COMT subfamily. As to quaternary structure, homodimer.

The enzyme catalyses (E)-caffeate + S-adenosyl-L-methionine = (E)-ferulate + S-adenosyl-L-homocysteine + H(+). The catalysed reaction is (E)-5-hydroxyferulate + S-adenosyl-L-methionine = (E)-sinapate + S-adenosyl-L-homocysteine + H(+). Its pathway is aromatic compound metabolism; phenylpropanoid biosynthesis. With respect to regulation, inhibited by Cu(2+), and to a lesser extent by Ni(2+), Mn(2+), Co(2+), Fe(3+) and Zn(2+). Unaffected by Fe(2+) and Mg(2+). In terms of biological role, catalyzes the conversion of caffeic acid to ferulic acid and of 5-hydroxyferulic acid to sinapic acid. The resulting products may subsequently be converted to the corresponding alcohols that are incorporated into lignins. This is Caffeic acid 3-O-methyltransferase from Ammi majus (Bishop's weed).